A 228-amino-acid polypeptide reads, in one-letter code: Small ribosomal subunit protein uS10m (228 aa).

The transit peptide at 1–17 directs the protein to the mitochondrion; it reads MKRYMFGTLPRVQPKRC.

It belongs to the universal ribosomal protein uS10 family. Component of the mitochondrial small ribosomal subunit (mt-SSU). Mature yeast 74S mitochondrial ribosomes consist of a small (37S) and a large (54S) subunit. The 37S small subunit contains a 15S ribosomal RNA (15S mt-rRNA) and at least 32 different proteins. The 54S large subunit contains a 21S rRNA (21S mt-rRNA) and at least 45 different proteins.

Its subcellular location is the mitochondrion. Component of the mitochondrial ribosome (mitoribosome), a dedicated translation machinery responsible for the synthesis of mitochondrial genome-encoded proteins, including at least some of the essential transmembrane subunits of the mitochondrial respiratory chain. The mitoribosomes are attached to the mitochondrial inner membrane and translation products are cotranslationally integrated into the membrane. In Schizosaccharomyces pombe (strain 972 / ATCC 24843) (Fission yeast), this protein is Small ribosomal subunit protein uS10m (rsm10).